The sequence spans 918 residues: Alpha-scruin (918 aa).

Kelch repeat units follow at residues 82 to 133, 134 to 187, 188 to 235, 237 to 289, 291 to 341, and 342 to 390; these read VVLA…YFHR, RVYV…VMDE, RIFV…NNEG, IYVI…TQNK, IWIW…KTGA, and HVFI…AIPA. The disordered stretch occupies residues 398–427; the sequence is EVPTSTPSSKAKPQPGSKPTSVKYKKQPDI. Positions 430 to 459 constitute an IQ domain; that stretch reads RNEAAKKVQRRWRRYIEQKSITKRMQQGDS. 6 Kelch repeats span residues 590-641, 642-695, 696-743, 745-795, 797-849, and 851-898; these read VIIG…YYRS, AIYI…VFND, VLYA…AHGG, IWLL…VCDN, IWLC…ALES, and LYIA…TIPP.

Sperm.

Actin bundling protein found in the acrosomal sperm process. The sequence is that of Alpha-scruin from Limulus polyphemus (Atlantic horseshoe crab).